Here is a 548-residue protein sequence, read N- to C-terminus: MADGVDHIDIYADVGEEFNQEAEYGAHDQIELYEDVLSPSANNGDAPEDRDYMDNLAASVGDDVVKGSVPNIVYTYTGKRIALYIGNLTWWTTDEDLTDAVHSLGVNDILEIKFFENRANGQSKGFALICVSSESSSKKLMDLLPKREMHGQKPIVTPCNKQFLSQFEMQSRKTATQAGQMSGEGKAGPPGINARLPFPPGGRGRGRFPTSGPGGDRFPGPAGPGGPPPPFSAGMTPPRPPMCPPGPPGPPGPPPPGQPLPPPLPGPPNRGERPPPPVMFPGQPYGQPSIVTLPPGPPPPGYGPPPGPPPPQQGPPPPPGAFPPRPPGPPMALGPPPHLPGPPPGGPPPAPHVNPNFFPPPGNAGMTSSDSRGPPPSDPYGRPPPYERGDYGPPGRDMDVVRTPLSEAEFEEIMNRNRAISSSAISRAVSDASAGDYGSAIETLVTAISLIKQSKVSADDRCKVLISSLQDCLHGIESKSYGSGSRRRERSRERDHSRSREKSRRHKSRSRDRHDDYYRERSRERERHRDRERDRDRERDREREYRHR.

Residues 81 to 161 (IALYIGNLTW…QKPIVTPCNK (81 aa)) enclose the RRM domain. The span at 169-180 (MQSRKTATQAGQ) shows a compositional bias: polar residues. Disordered regions lie at residues 169 to 401 (MQSR…MDVV) and 473 to 548 (LHGI…YRHR). Composition is skewed to pro residues over residues 221–279 (PAGP…PPVM), 294–362 (PPGP…PPPG), and 373–384 (GPPPSDPYGRPP). Composition is skewed to basic and acidic residues over residues 385-400 (PYER…DMDV) and 490-500 (RSRERDHSRSR). The segment covering 501–511 (EKSRRHKSRSR) has biased composition (basic residues). The span at 512-548 (DRHDDYYRERSRERERHRDRERDRDRERDREREYRHR) shows a compositional bias: basic and acidic residues.

It belongs to the RRM CPSF6/7 family. In terms of assembly, component of the cleavage factor Im (CFIm) complex.

It is found in the nucleus. The protein localises to the nucleoplasm. Its subcellular location is the nucleus speckle. It localises to the cytoplasm. Its function is as follows. Component of the cleavage factor Im (CFIm) complex that functions as an activator of the pre-mRNA 3'-end cleavage and polyadenylation processing required for the maturation of pre-mRNA into functional mRNAs. CFIm contributes to the recruitment of multiprotein complexes on specific sequences on the pre-mRNA 3'-end, so called cleavage and polyadenylation signals (pA signals). Most pre-mRNAs contain multiple pA signals, resulting in alternative cleavage and polyadenylation (APA) producing mRNAs with variable 3'-end formation. The CFIm complex acts as a key regulator of cleavage and polyadenylation site choice during APA through its binding to 5'-UGUA-3' elements localized in the 3'-untranslated region (UTR) for a huge number of pre-mRNAs. Plays a role in mRNA export. This is Cleavage and polyadenylation specificity factor subunit 6 from Xenopus laevis (African clawed frog).